The following is a 257-amino-acid chain: Imidazole glycerol phosphate synthase subunit HisF (257 aa).

Active-site residues include D11 and D130.

This sequence belongs to the HisA/HisF family. In terms of assembly, heterodimer of HisH and HisF.

It is found in the cytoplasm. It carries out the reaction 5-[(5-phospho-1-deoxy-D-ribulos-1-ylimino)methylamino]-1-(5-phospho-beta-D-ribosyl)imidazole-4-carboxamide + L-glutamine = D-erythro-1-(imidazol-4-yl)glycerol 3-phosphate + 5-amino-1-(5-phospho-beta-D-ribosyl)imidazole-4-carboxamide + L-glutamate + H(+). Its pathway is amino-acid biosynthesis; L-histidine biosynthesis; L-histidine from 5-phospho-alpha-D-ribose 1-diphosphate: step 5/9. IGPS catalyzes the conversion of PRFAR and glutamine to IGP, AICAR and glutamate. The HisF subunit catalyzes the cyclization activity that produces IGP and AICAR from PRFAR using the ammonia provided by the HisH subunit. This chain is Imidazole glycerol phosphate synthase subunit HisF, found in Pseudoalteromonas translucida (strain TAC 125).